The following is a 94-amino-acid chain: Integration host factor subunit beta (94 aa).

The protein belongs to the bacterial histone-like protein family. As to quaternary structure, heterodimer of an alpha and a beta chain.

In terms of biological role, this protein is one of the two subunits of integration host factor, a specific DNA-binding protein that functions in genetic recombination as well as in transcriptional and translational control. In Azorhizobium caulinodans (strain ATCC 43989 / DSM 5975 / JCM 20966 / LMG 6465 / NBRC 14845 / NCIMB 13405 / ORS 571), this protein is Integration host factor subunit beta.